The chain runs to 259 residues: MLSKRIIPCLDVRDGRTTKGIKFRNNVDIGDPVDMGRFYYEEGADEIVFYDITASSDRRGIMLDVVKRVAETIFIPFSVGGGIRTLEDMRDVLLAGAEKVSVNSAAVLNPDIISQGAEAFGSQCIVLGMDVKHVAPSTRIPSGYEIVINGGRTTTGFDALWWALEAERLGAGEICLNSIDADGTRDGYELRLTRLISTSVRIPVIASGGAGTPNHLADVLKQGRADAALIASMVHYGTYSIRRIKQFLDDNGIRVRKTW.

Residues D11 and D130 contribute to the active site.

Belongs to the HisA/HisF family. In terms of assembly, heterodimer of HisH and HisF.

The protein localises to the cytoplasm. It carries out the reaction 5-[(5-phospho-1-deoxy-D-ribulos-1-ylimino)methylamino]-1-(5-phospho-beta-D-ribosyl)imidazole-4-carboxamide + L-glutamine = D-erythro-1-(imidazol-4-yl)glycerol 3-phosphate + 5-amino-1-(5-phospho-beta-D-ribosyl)imidazole-4-carboxamide + L-glutamate + H(+). It participates in amino-acid biosynthesis; L-histidine biosynthesis; L-histidine from 5-phospho-alpha-D-ribose 1-diphosphate: step 5/9. In terms of biological role, IGPS catalyzes the conversion of PRFAR and glutamine to IGP, AICAR and glutamate. The HisF subunit catalyzes the cyclization activity that produces IGP and AICAR from PRFAR using the ammonia provided by the HisH subunit. The protein is Imidazole glycerol phosphate synthase subunit HisF of Syntrophobacter fumaroxidans (strain DSM 10017 / MPOB).